Reading from the N-terminus, the 985-residue chain is Rho guanine nucleotide exchange factor 2 (985 aa).

The segment at 1 to 32 (MSRIESLTRARIDRSKEQATKTREKEKMKEAK) is disordered. Residues 39 to 86 (GHLFTTISVSGMTMCYACNKSITAKEALICPTCNVTIHNRCKDTLANC) form a Phorbol-ester/DAG-type zinc finger. S109, S122, S129, S133, and S137 each carry phosphoserine. Positions 131–161 (RQSLLGSRRGLSSLSLAKSVSTTNIAGHFND) are interaction with DYNLT1. S143 carries the post-translational modification Phosphoserine; by PAK4. A phosphoserine mark is found at S151, S163, S172, S174, and S177. In terms of domain architecture, DH spans 236-433 (KKQDVIYELI…KELLSNVDQD (198 aa)). Position 354 is an N6-acetyllysine (K354). In terms of domain architecture, PH spans 473 to 572 (KLIHEGCLLW…WIRVIQQSVR (100 aa)). The stretch at 591 to 619 (LRRIKTKLQQKNQALVELLQKNVELFAEM) forms a coiled coil. 2 positions are modified to phosphoserine: S646 and S649. The residue at position 680 (T680) is a Phosphothreonine; by MAPK1 or MAPK3. Phosphoserine occurs at positions 692, 710, and 781. T795 bears the Phosphothreonine mark. Residues 797-866 (EKQATELALL…RQLAALGQNE (70 aa)) are a coiled coil. S885 is modified (phosphoserine). Disordered stretches follow at residues 890–909 (DALY…DRLD) and 918–985 (HRPF…ASES). Y893 is modified (phosphotyrosine). S895 is modified (phosphoserine; by PAK4). Residues 919 to 938 (RPFDDREAQELGSPEDRLQD) are compositionally biased toward basic and acidic residues. A phosphoserine mark is found at S931, S939, and S940. Positions 940–949 (SDPDTGSEEE) are enriched in acidic residues. T944 is modified (phosphothreonine). Residues S946, S951, S952, S955, and S959 each carry the phosphoserine modification.

Found in a complex composed at least of ARHGEF2, NOD2 and RIPK2. Interacts with RIPK2; the interaction mediates tyrosine phosphorylation of RIPK2 by Src kinase CSK. Interacts with RIPK1 and RIPK3. Interacts with YWHAZ/14-3-3 zeta; when phosphorylated at Ser-885. Interacts with the kinases PAK4, AURKA and MAPK1. Interacts with RHOA and RAC1. Interacts with NOD1. Interacts (via the N- terminal zinc finger) with CAPN6 (via domain II). Interacts with DYNLT1. Phosphorylation of Ser-885 by PAK1 induces binding to protein YWHAZ, promoting its relocation to microtubules and the inhibition of its activity. Phosphorylated by AURKA and CDK1 during mitosis, which negatively regulates its activity. Phosphorylation by MAPK1 or MAPK3 increases nucleotide exchange activity. Phosphorylation by PAK4 releases GEF-H1 from the microtubules. Phosphorylated on serine, threonine and tyrosine residues in a RIPK2-dependent manner. As to expression, ubiquitous, with the exception of liver tissue. Levels are high in hemopoietic tissues (thymus, spleen, bone marrow) as well as in kidney and lung. Expressed in the germinal zones of both the neocortex and the cerebellum and in the pontine gray nuclei.

It localises to the cytoplasm. It is found in the cytoskeleton. The protein localises to the cell junction. The protein resides in the tight junction. Its subcellular location is the golgi apparatus. It localises to the spindle. It is found in the cytoplasmic vesicle. In terms of biological role, activates Rho-GTPases by promoting the exchange of GDP for GTP. May be involved in epithelial barrier permeability, cell motility and polarization, dendritic spine morphology, antigen presentation, leukemic cell differentiation, cell cycle regulation, innate immune response, and cancer. Binds Rac-GTPases, but does not seem to promote nucleotide exchange activity toward Rac-GTPases. May stimulate instead the cortical activity of Rac. Inactive toward CDC42, TC10, or Ras-GTPases. Forms an intracellular sensing system along with NOD1 for the detection of microbial effectors during cell invasion by pathogens. Involved in innate immune signaling transduction pathway promoting cytokine IL6/interleukin-6 and TNF-alpha secretion in macrophage upon stimulation by bacterial peptidoglycans; acts as a signaling intermediate between NOD2 receptor and RIPK2 kinase. Contributes to the tyrosine phosphorylation of RIPK2 through Src tyrosine kinase leading to NF-kappaB activation by NOD2. Overexpression activates Rho-, but not Rac-GTPases, and increases paracellular permeability. Involved in neuronal progenitor cell division and differentiation. Involved in the migration of precerebellar neurons. This chain is Rho guanine nucleotide exchange factor 2 (Arhgef2), found in Mus musculus (Mouse).